The primary structure comprises 481 residues: Zygotic gap protein knirps (481 aa).

Residues 2–78 (NQTCKVCGEP…VGMSKGGSRY (77 aa)) constitute a DNA-binding region (nuclear receptor). 2 NR C4-type zinc fingers span residues 5-25 (CKVC…CEGC) and 42-66 (CKND…LRKC). Low complexity-rich tracts occupy residues 100-111 (AAAGKAPGHATG), 127-148 (QQQQ…QQQQ), 245-264 (TPPT…AASP), 316-335 (SHSS…SPLS), and 420-440 (TTNS…TSST). 4 disordered regions span residues 100–161 (AAAG…GYTG), 231–294 (SVDS…PHTI), 308–336 (LLPG…PLSF), and 420–442 (TTNS…STEA).

Belongs to the nuclear hormone receptor family. NR0 subfamily.

The protein localises to the nucleus. Transcriptional repressor. Binds to multiple sites in the eve stripe 3 enhancer element. Plays an essential role in the segmentation process both by refining the expression patterns of gap genes and by establishing pair-rules stripes of gene expression. This is Zygotic gap protein knirps (kni) from Drosophila virilis (Fruit fly).